Here is a 327-residue protein sequence, read N- to C-terminus: Malate dehydrogenase (327 aa).

Position 11 to 17 (11 to 17 (GAAGQIG)) interacts with NAD(+). The substrate site is built by Arg-92 and Arg-98. NAD(+) is bound by residues Asn-105, Gln-112, and 129–131 (VGN). 2 residues coordinate substrate: Asn-131 and Arg-162. His-187 acts as the Proton acceptor in catalysis.

Belongs to the LDH/MDH superfamily. MDH type 2 family.

The enzyme catalyses (S)-malate + NAD(+) = oxaloacetate + NADH + H(+). Its function is as follows. Catalyzes the reversible oxidation of malate to oxaloacetate. The chain is Malate dehydrogenase from Thermus thermophilus (strain ATCC BAA-163 / DSM 7039 / HB27).